Consider the following 244-residue polypeptide: Probable phosphatase NT01CX_1282 (244 aa).

Residues His-8, His-10, His-16, His-41, Glu-74, His-102, His-132, Asp-193, and His-195 each contribute to the Zn(2+) site.

Belongs to the PHP family. The cofactor is Zn(2+).

The chain is Probable phosphatase NT01CX_1282 from Clostridium novyi (strain NT).